A 183-amino-acid chain; its full sequence is Putative manganese efflux pump MntP (183 aa).

A run of 6 helical transmembrane segments spans residues 6 to 26 (LFLI…CIGL), 40 to 60 (IYFG…GFLF), 64 to 84 (IATM…IIMI), 101 to 121 (MNII…FTAL), 135 to 155 (LFIG…SKYL), and 158 to 178 (IDVI…FFGL).

It belongs to the MntP (TC 9.B.29) family.

The protein localises to the cell membrane. In terms of biological role, probably functions as a manganese efflux pump. This is Putative manganese efflux pump MntP from Clostridium tetani (strain Massachusetts / E88).